The chain runs to 399 residues: Organelle RRM domain-containing protein 1, chloroplastic (399 aa).

A chloroplast-targeting transit peptide spans 1–52; it reads MDAARASLLLAGGLAVSTSTSAVATAAQTVSIPHLSPHTRRRRQRRFLRLAS. The RRM domain maps to 295-373; it reads KRLFVTGLSF…WMIVVDVAKH (79 aa). The segment at 377-399 is disordered; the sequence is DRQPPYSASGRSNQVLRSRYHTG.

Its subcellular location is the plastid. The protein resides in the chloroplast. In terms of biological role, involved in C-to-U editing of chloroplastic RNA. Functions as major chloroplastic editing factor. Controls a majority of the chloroplastic editing sites. The sequence is that of Organelle RRM domain-containing protein 1, chloroplastic from Oryza sativa subsp. japonica (Rice).